The sequence spans 232 residues: MIVAANLKCNHTRASFLNFTKKLDNFLSGEASNFKKNEILIFPPNTAFCDQISNFTQGAQNFFPCENGSFTGEIGADMLNEFGIKSVLIGHSERRVIFSESDRMVLEKFKFAKKRGWRIIFCVGESDIVRMNGNYREVLSDQLSEIDLDYENLIIAYEPIWAIGTGKSAKNEQIEEVLEFLAEKTEAPLLYGGSVNLKNISQISKLPHCSGVLIGSASWEAENFINLLKELQ.

Residue 6 to 8 (NLK) coordinates substrate. The active-site Electrophile is the H91. The Proton acceptor role is filled by E158. The substrate site is built by G164 and S194.

This sequence belongs to the triosephosphate isomerase family. Homodimer.

It localises to the cytoplasm. It carries out the reaction D-glyceraldehyde 3-phosphate = dihydroxyacetone phosphate. It functions in the pathway carbohydrate biosynthesis; gluconeogenesis. The protein operates within carbohydrate degradation; glycolysis; D-glyceraldehyde 3-phosphate from glycerone phosphate: step 1/1. Functionally, involved in the gluconeogenesis. Catalyzes stereospecifically the conversion of dihydroxyacetone phosphate (DHAP) to D-glyceraldehyde-3-phosphate (G3P). The chain is Triosephosphate isomerase from Campylobacter hominis (strain ATCC BAA-381 / DSM 21671 / CCUG 45161 / LMG 19568 / NCTC 13146 / CH001A).